A 425-amino-acid chain; its full sequence is Pleckstrin homology domain-containing family A member 2 (425 aa).

In terms of domain architecture, PH 1 spans 7-113; that stretch reads QNRICGFLDI…WVEALNQASK (107 aa). K141 participates in a covalent cross-link: Glycyl lysine isopeptide (Lys-Gly) (interchain with G-Cter in SUMO2). S184 carries the post-translational modification Phosphoserine. In terms of domain architecture, PH 2 spans 198–298; the sequence is PLIKSGYCVK…WIEGIGAAVQ (101 aa). Over residues 310–331 the composition is skewed to polar residues; sequence SRSISLTRPGSSTLTSAPNSIL. The tract at residues 310–425 is disordered; it reads SRSISLTRPG…DDENIRTSDV (116 aa). S314 and S349 each carry phosphoserine. Basic and acidic residues-rich tracts occupy residues 363-375 and 400-410; these read AEEKPLSVEHAPE and RSEPQHPKEKP.

In terms of assembly, binds MPDZ and PTPN13.

It localises to the cytoplasm. The protein localises to the cell membrane. It is found in the nucleus. Binds specifically to phosphatidylinositol 3,4-diphosphate (PtdIns3,4P2), but not to other phosphoinositides. May recruit other proteins to the plasma membrane. In Mus musculus (Mouse), this protein is Pleckstrin homology domain-containing family A member 2 (Plekha2).